We begin with the raw amino-acid sequence, 322 residues long: UDP-N-acetylenolpyruvoylglucosamine reductase (322 aa).

In terms of domain architecture, FAD-binding PCMH-type spans 36–202 (RAGGPAQVLF…TSVLFEGVPG (167 aa)). Residue Arg182 is part of the active site. The Proton donor role is filled by Ser231. The active site involves Glu301.

It belongs to the MurB family. FAD serves as cofactor.

The protein resides in the cytoplasm. The enzyme catalyses UDP-N-acetyl-alpha-D-muramate + NADP(+) = UDP-N-acetyl-3-O-(1-carboxyvinyl)-alpha-D-glucosamine + NADPH + H(+). It functions in the pathway cell wall biogenesis; peptidoglycan biosynthesis. Cell wall formation. The protein is UDP-N-acetylenolpyruvoylglucosamine reductase of Brucella suis biovar 1 (strain 1330).